The chain runs to 298 residues: Cyclin-dependent kinase 2 (298 aa).

In terms of domain architecture, Protein kinase spans Phe4–Phe286. Residues Ile10–Val18, Lys33, Glu81–Leu83, and Asp86 each bind ATP. Position 14 is a phosphothreonine (Thr14). Residue Tyr15 is modified to Phosphotyrosine. Asp127 (proton acceptor) is an active-site residue. Residues Lys129–Asn132 and Asp145 contribute to the ATP site. A Phosphothreonine; by CAK modification is found at Thr160.

This sequence belongs to the protein kinase superfamily. CMGC Ser/Thr protein kinase family. CDC2/CDKX subfamily.

The enzyme catalyses L-seryl-[protein] + ATP = O-phospho-L-seryl-[protein] + ADP + H(+). It carries out the reaction L-threonyl-[protein] + ATP = O-phospho-L-threonyl-[protein] + ADP + H(+). Phosphorylation at Thr-14 or Tyr-15 inactivates the enzyme, while phosphorylation at Thr-160 activates it. Functionally, serine/threonine-protein kinase involved in the control of the cell cycle; essential for meiosis, but dispensable for mitosis. Triggers duplication of centrosomes and DNA. Acts at the G1-S transition to promote the E2F transcriptional program and the initiation of DNA synthesis, and modulates G2 progression; controls the timing of entry into mitosis/meiosis by controlling the subsequent activation of cyclin B/CDK1 by phosphorylation, and coordinates the activation of cyclin B/CDK1 at the centrosome and in the nucleus. Crucial role in orchestrating a fine balance between cellular proliferation, cell death, and DNA repair in embryonic stem cells (ESCs). Activity of CDK2 is maximal during S phase and G2; activated by interaction with cyclin E during the early stages of DNA synthesis to permit G1-S transition, and subsequently activated by cyclin A2 (cyclin A1 in germ cells) during the late stages of DNA replication to drive the transition from S phase to mitosis, the G2 phase. The protein is Cyclin-dependent kinase 2 (cdk2) of Carassius auratus (Goldfish).